The following is a 273-amino-acid chain: Undecaprenyl-diphosphatase (273 aa).

Transmembrane regions (helical) follow at residues 4 to 24 (FLLL…FLPI), 43 to 63 (KGKV…CWEY), 83 to 103 (FVLN…LFIK), 109 to 129 (LFHP…ILWA), 184 to 204 (ATEF…FYDL), 218 to 238 (VFAI…RGLL), and 248 to 268 (VFAW…YSGM).

This sequence belongs to the UppP family.

The protein localises to the cell inner membrane. It catalyses the reaction di-trans,octa-cis-undecaprenyl diphosphate + H2O = di-trans,octa-cis-undecaprenyl phosphate + phosphate + H(+). Catalyzes the dephosphorylation of undecaprenyl diphosphate (UPP). Confers resistance to bacitracin. The chain is Undecaprenyl-diphosphatase from Nitrosospira multiformis (strain ATCC 25196 / NCIMB 11849 / C 71).